Here is an 844-residue protein sequence, read N- to C-terminus: Meiotically up-regulated gene 61 protein (844 aa).

Disordered stretches follow at residues 333–354 (ENNS…PQSQ) and 384–415 (NFGL…EISS). Residues 384 to 394 (NFGLEASNTST) show a composition bias toward polar residues. The span at 395 to 407 (PEKKKFDSQKPDD) shows a compositional bias: basic and acidic residues. Residues 459 to 479 (VVNSLWLVLLVVPLLGFVGFW) traverse the membrane as a helical segment. 605 to 612 (AKNLNGKS) lines the ATP pocket. A helical membrane pass occupies residues 705 to 725 (VISCWRIYLLIGILAAITGTV).

Interacts with sad1.

It is found in the endoplasmic reticulum membrane. It localises to the nucleus membrane. In terms of biological role, required for correct meiotic chromosome segregation. The chain is Meiotically up-regulated gene 61 protein (mug61) from Schizosaccharomyces pombe (strain 972 / ATCC 24843) (Fission yeast).